Consider the following 692-residue polypeptide: Elongation factor G (692 aa).

The tr-type G domain maps to 9–284; it reads EKIRNIGIMA…AVVDYLPSPV (276 aa). GTP contacts are provided by residues 18-25, 82-86, and 136-139; these read AHIDAGKT, DTPGH, and NKMD.

The protein belongs to the TRAFAC class translation factor GTPase superfamily. Classic translation factor GTPase family. EF-G/EF-2 subfamily.

The protein localises to the cytoplasm. In terms of biological role, catalyzes the GTP-dependent ribosomal translocation step during translation elongation. During this step, the ribosome changes from the pre-translocational (PRE) to the post-translocational (POST) state as the newly formed A-site-bound peptidyl-tRNA and P-site-bound deacylated tRNA move to the P and E sites, respectively. Catalyzes the coordinated movement of the two tRNA molecules, the mRNA and conformational changes in the ribosome. The protein is Elongation factor G of Neorickettsia sennetsu (strain ATCC VR-367 / Miyayama) (Ehrlichia sennetsu).